The chain runs to 245 residues: Thiamine phosphate phosphatase-like protein (245 aa).

Residue Asp9 is the Nucleophile of the active site. The Mg(2+) site is built by Asp9, Asp11, and Asp179. Asp11 serves as the catalytic Proton donor.

Belongs to the HAD-like hydrolase superfamily. As to quaternary structure, monomer. Mg(2+) is required as a cofactor.

The enzyme catalyses thiamine phosphate + H2O = thiamine + phosphate. HAD-like hydrolase that has a thiamine monophosphate phosphatase activity in a heterologous system. Does not contribute to thiamine monophosphate phosphatase activity in planta. The protein is Thiamine phosphate phosphatase-like protein of Arabidopsis thaliana (Mouse-ear cress).